We begin with the raw amino-acid sequence, 223 residues long: Uracil-DNA glycosylase (223 aa).

Catalysis depends on Asp-67, which acts as the Proton acceptor.

It belongs to the uracil-DNA glycosylase (UDG) superfamily. UNG family.

The protein localises to the cytoplasm. It catalyses the reaction Hydrolyzes single-stranded DNA or mismatched double-stranded DNA and polynucleotides, releasing free uracil.. Excises uracil residues from the DNA which can arise as a result of misincorporation of dUMP residues by DNA polymerase or due to deamination of cytosine. This Borreliella burgdorferi (strain ZS7) (Borrelia burgdorferi) protein is Uracil-DNA glycosylase.